Reading from the N-terminus, the 1151-residue chain is Protein kinase C-like 1 (1151 aa).

REM-1 domains follow at residues 1–67 and 106–183; these read MSFS…KTAQ and KYDC…INVD. The interval 64-88 is disordered; that stretch reads KTAQQSQGENGSEDNERCNSKEYGF. The 120-residue stretch at 190 to 309 folds into the C2 domain; that stretch reads QPNDIMDNQQ…IRKKKAGQTN (120 aa). Serine 226 is modified (phosphoserine). A disordered region spans residues 306–331; that stretch reads GQTNEQQGWVNASNINGGSSLASEEG. Phorbol-ester/DAG-type zinc fingers lie at residues 414–461 and 481–531; these read GHHF…VTKC and PHRF…PDFC. Disordered stretches follow at residues 546 to 620 and 649 to 669; these read QDTK…IIDK and AQQT…SNRR. Over residues 560–577 the composition is skewed to polar residues; the sequence is PSAQLGSSIGTANGSDLS. Over residues 605–620 the composition is skewed to basic and acidic residues; it reads VGRDSPTKQHDPIIDK. Position 761 is a phosphoserine (serine 761). The tract at residues 782-816 is disordered; the sequence is LAPTSTHASRTTDQQSPQKSQTSTSAKHKKRAAKR. A compositionally biased stretch (low complexity) spans 792 to 806; it reads TTDQQSPQKSQTSTS. A compositionally biased stretch (basic residues) spans 807 to 816; the sequence is AKHKKRAAKR. Positions 824–1083 constitute a Protein kinase domain; the sequence is FVLLKVLGKG…ADEVMEEPFF (260 aa). ATP is bound by residues 830–838 and lysine 853; that span reads LGKGNFGKV. Catalysis depends on aspartate 949, which acts as the Proton acceptor. An AGC-kinase C-terminal domain is found at 1084–1151; it reads RNINFDDILN…FSFMPDDLDL (68 aa).

Belongs to the protein kinase superfamily. AGC Ser/Thr protein kinase family. PKC subfamily.

It catalyses the reaction L-seryl-[protein] + ATP = O-phospho-L-seryl-[protein] + ADP + H(+). It carries out the reaction L-threonyl-[protein] + ATP = O-phospho-L-threonyl-[protein] + ADP + H(+). Required for cell growth and for the G2-&gt;M transition of the cell division cycle. Mediates a protein kinase cascade; it activates BCK1 which itself activates MKK1/MKK2. The protein is Protein kinase C-like 1 (PKC1) of Saccharomyces cerevisiae (strain ATCC 204508 / S288c) (Baker's yeast).